Consider the following 813-residue polypeptide: Leucine--tRNA ligase (813 aa).

A 'HIGH' region motif is present at residues 42–52 (PYTSGNLHIGH). The 'KMSKS' region motif lies at 580 to 584 (KMSKS). K583 serves as a coordination point for ATP.

Belongs to the class-I aminoacyl-tRNA synthetase family.

Its subcellular location is the cytoplasm. It carries out the reaction tRNA(Leu) + L-leucine + ATP = L-leucyl-tRNA(Leu) + AMP + diphosphate. The polypeptide is Leucine--tRNA ligase (Dehalococcoides mccartyi (strain CBDB1)).